Reading from the N-terminus, the 229-residue chain is Potassium/proton antiporter CemA (229 aa).

3 helical membrane passes run 7 to 27 (FTPL…SLSF), 114 to 134 (IICF…LVIL), and 189 to 209 (ILSG…KFWI).

It belongs to the CemA family.

The protein localises to the plastid. It is found in the chloroplast inner membrane. The catalysed reaction is K(+)(in) + H(+)(out) = K(+)(out) + H(+)(in). In terms of biological role, contributes to K(+)/H(+) antiport activity by supporting proton efflux to control proton extrusion and homeostasis in chloroplasts in a light-dependent manner to modulate photosynthesis. Prevents excessive induction of non-photochemical quenching (NPQ) under continuous-light conditions. Indirectly promotes efficient inorganic carbon uptake into chloroplasts. The polypeptide is Potassium/proton antiporter CemA (Panax ginseng (Korean ginseng)).